Here is a 350-residue protein sequence, read N- to C-terminus: Heat-inducible transcription repressor HrcA (350 aa).

This sequence belongs to the HrcA family.

Negative regulator of class I heat shock genes (grpE-dnaK-dnaJ and groELS operons). Prevents heat-shock induction of these operons. This is Heat-inducible transcription repressor HrcA from Xanthomonas axonopodis pv. citri (strain 306).